The primary structure comprises 447 residues: ATP-dependent protease ATPase subunit HslU (447 aa).

Residues I17, 59–64, D256, E321, and R393 contribute to the ATP site; that span reads GVGKTE.

This sequence belongs to the ClpX chaperone family. HslU subfamily. As to quaternary structure, a double ring-shaped homohexamer of HslV is capped on each side by a ring-shaped HslU homohexamer. The assembly of the HslU/HslV complex is dependent on binding of ATP.

The protein resides in the cytoplasm. ATPase subunit of a proteasome-like degradation complex; this subunit has chaperone activity. The binding of ATP and its subsequent hydrolysis by HslU are essential for unfolding of protein substrates subsequently hydrolyzed by HslV. HslU recognizes the N-terminal part of its protein substrates and unfolds these before they are guided to HslV for hydrolysis. The chain is ATP-dependent protease ATPase subunit HslU from Stutzerimonas stutzeri (strain A1501) (Pseudomonas stutzeri).